Here is a 368-residue protein sequence, read N- to C-terminus: MWIKELELKHYRNYDHLLASFSSGLNVFIGNNAQGKTNFLEAIYFLSLTRSHRTRADKELIHFDHSTVSLTGKIQRISGTVDLEINLSDKGRVTKINALKQAKLSDYIGTMMVVLFAPEDLQLVKGAPSLRRKFIDIDLGQIKPVYLSELSHYNHVLKQRNSYLKSAQQIDAAFLAVLDEQLAGYGARVMEHRIDFINALEKEANTHHQAISNGLESLSLSYQSSVVFDKKTNIYQQFLHQLEKNHQKDFFRKNTSVGPHRDNLAFYINGMNANFASQGQHRSLILSLKMAEVSLMKALTGDNPILLLDDVMSELDNTRQTKLLETVIKENVQTFITTTSLDHLSQLPEGIRIFHVTKGTVQVDSDIH.

30 to 37 (GNNAQGKT) lines the ATP pocket.

The protein belongs to the RecF family.

It localises to the cytoplasm. Its function is as follows. The RecF protein is involved in DNA metabolism; it is required for DNA replication and normal SOS inducibility. RecF binds preferentially to single-stranded, linear DNA. It also seems to bind ATP. This chain is DNA replication and repair protein RecF, found in Streptococcus pyogenes serotype M12 (strain MGAS2096).